We begin with the raw amino-acid sequence, 271 residues long: Insulin-like growth factor-binding protein 5 (271 aa).

Positions 1–19 (MVISVVLLLLAACAVPAQG) are cleaved as a signal peptide. The IGFBP N-terminal domain occupies 22 to 102 (SFVHCEPCDE…LHGRGVCLNE (81 aa)). 6 disulfide bridges follow: cysteine 26–cysteine 52, cysteine 29–cysteine 54, cysteine 37–cysteine 55, cysteine 44–cysteine 58, cysteine 66–cysteine 79, and cysteine 73–cysteine 99. A compositionally biased stretch (basic and acidic residues) spans 109 to 121 (TKIERDSREHEEP). Residues 109–129 (TKIERDSREHEEPTTSEMAEE) form a disordered region. Residue serine 115 is modified to Phosphoserine. A Thyroglobulin type-1 domain is found at 188 to 262 (QGPCRRHMEA…MEYVDGDFQC (75 aa)). Cystine bridges form between cysteine 191/cysteine 218, cysteine 229/cysteine 240, and cysteine 242/cysteine 262.

In terms of assembly, interacts with IGF1; this interaction enhances the growth stimulatory effects of IGF1 on fibroblasts. Interacts with CAV1; this interaction allows trafficking of IGFBP5 from the plasma membrane to the nucleus. Interacts with NCL; this interaction is necessary for IGFBP5 localization to the nucleus. As to expression, mostly in kidney.

It localises to the secreted. It is found in the cytoplasm. Its subcellular location is the nucleus. Its function is as follows. Multifunctional protein that plays a critical role in regulating the availability of IGFs to their receptors and thereby regulates IGF-mediated cellular processes including proliferation, differentiation, and apoptosis in a cell-type specific manner. Increases the cell proliferation of osteoblasts, intestinal smooth muscle cells and neuroblastoma cells. Enhances adhesion and survival of epithelial cells but decreases adhesion of mesenchymal cells. Once secreted, acts as a major mediator of mTORC1-dependent feedback inhibition of IGF1 signaling. Also plays a role in the induction of extracellular matrix (ECM) production and deposition independently of its nuclear translocation and binding to IGFs. Acts itself as a growth factor that can act independently of IGFs to regulate bone formation. Acts as a ligand for the ROR1 receptor which triggers formation of ROR1/HER2 heterodimer to enhance CREB oncogenic signaling. The chain is Insulin-like growth factor-binding protein 5 (Igfbp5) from Rattus norvegicus (Rat).